The primary structure comprises 440 residues: Ran-specific GTPase-activating protein 30 (440 aa).

In terms of domain architecture, RanBD1 spans 1–314; that stretch reads MDEILAKAGS…LVLKIDRSDD (314 aa). Position 272 is a phosphothreonine (T272). Over residues 341–371 the composition is skewed to acidic residues; sequence IEEDEEEDEEEDEEEGKDGEERKEEEEEENK. Residues 341–375 are disordered; the sequence is IEEDEEEDEEEDEEEGKDGEERKEEEEEENKLEDK.

In terms of assembly, interacts with GSP1.

It is found in the cytoplasm. The protein resides in the nucleus. Its function is as follows. Important for the export of protein containing nuclear export signal (NES) out of the nucleus. Stimulates the GTPase activity of GSP1. The polypeptide is Ran-specific GTPase-activating protein 30 (YRB30) (Saccharomyces cerevisiae (strain ATCC 204508 / S288c) (Baker's yeast)).